We begin with the raw amino-acid sequence, 936 residues long: Translation initiation factor IF-2 (936 aa).

A disordered region spans residues 102–332; that stretch reads PEPGPVLKKD…SGSRQKFRKM (231 aa). The segment covering 108–119 has biased composition (basic and acidic residues); that stretch reads LKKDHVHEEPEK. Residues 127–137 show a composition bias toward acidic residues; the sequence is SEPEVEPEVEP. Positions 151–160 are enriched in low complexity; the sequence is PTEAVSVPEP. Residues 182 to 194 are compositionally biased toward polar residues; the sequence is QSSTMKAQASPEM. 2 stretches are compositionally biased toward basic and acidic residues: residues 217-227 and 237-267; these read SALDRGSESDR and KEQA…EAKT. Residues 272–281 are compositionally biased toward low complexity; that stretch reads KAAGTTGSAA. Basic residues predominate over residues 287 to 297; it reads SKKKKGGKKKK. One can recognise a tr-type G domain in the interval 433 to 603; the sequence is IRPPVVTIMG…LMEAEIRELK (171 aa). The G1 stretch occupies residues 442–449; the sequence is GHVDHGKT. 442-449 is a binding site for GTP; it reads GHVDHGKT. Residues 467–471 are G2; sequence GITQH. A G3 region spans residues 489-492; that stretch reads DTPG. Residues 489 to 493 and 543 to 546 contribute to the GTP site; these read DTPGH and NKID. The segment at 543–546 is G4; that stretch reads NKID. Residues 579–581 form a G5 region; the sequence is SAK.

The protein belongs to the TRAFAC class translation factor GTPase superfamily. Classic translation factor GTPase family. IF-2 subfamily.

It localises to the cytoplasm. In terms of biological role, one of the essential components for the initiation of protein synthesis. Protects formylmethionyl-tRNA from spontaneous hydrolysis and promotes its binding to the 30S ribosomal subunits. Also involved in the hydrolysis of GTP during the formation of the 70S ribosomal complex. This is Translation initiation factor IF-2 from Prosthecochloris aestuarii (strain DSM 271 / SK 413).